The sequence spans 234 residues: Biosynthetic peptidoglycan transglycosylase (234 aa).

A helical transmembrane segment spans residues 11-31 (RFLLFAMLGFVGLSVLLVLVF).

It belongs to the glycosyltransferase 51 family.

The protein resides in the cell inner membrane. The catalysed reaction is [GlcNAc-(1-&gt;4)-Mur2Ac(oyl-L-Ala-gamma-D-Glu-L-Lys-D-Ala-D-Ala)](n)-di-trans,octa-cis-undecaprenyl diphosphate + beta-D-GlcNAc-(1-&gt;4)-Mur2Ac(oyl-L-Ala-gamma-D-Glu-L-Lys-D-Ala-D-Ala)-di-trans,octa-cis-undecaprenyl diphosphate = [GlcNAc-(1-&gt;4)-Mur2Ac(oyl-L-Ala-gamma-D-Glu-L-Lys-D-Ala-D-Ala)](n+1)-di-trans,octa-cis-undecaprenyl diphosphate + di-trans,octa-cis-undecaprenyl diphosphate + H(+). It functions in the pathway cell wall biogenesis; peptidoglycan biosynthesis. Functionally, peptidoglycan polymerase that catalyzes glycan chain elongation from lipid-linked precursors. This Chromohalobacter salexigens (strain ATCC BAA-138 / DSM 3043 / CIP 106854 / NCIMB 13768 / 1H11) protein is Biosynthetic peptidoglycan transglycosylase.